Here is a 478-residue protein sequence, read N- to C-terminus: JmjC domain-containing histone demethylation protein 1 (478 aa).

The PHD-type zinc finger occupies 6–70; sequence VKCHFCKKDD…HVESFKCTLH (65 aa). In terms of domain architecture, JmjC spans 242-401; it reads SHVESFKDGI…TQLNVVEIEH (160 aa). Residue T294 coordinates substrate. Fe cation is bound by residues H297 and D299. K314 lines the substrate pocket. Residue H369 coordinates Fe cation.

The protein belongs to the JHDM1 histone demethylase family. Requires Fe(2+) as cofactor.

Its subcellular location is the nucleus. It catalyses the reaction N(6),N(6)-dimethyl-L-lysyl(36)-[histone H3] + 2 2-oxoglutarate + 2 O2 = L-lysyl(36)-[histone H3] + 2 formaldehyde + 2 succinate + 2 CO2. Histone demethylase that specifically demethylates 'Lys-36' of histone H3, thereby playing a central role in histone code. This chain is JmjC domain-containing histone demethylation protein 1 (JHD1), found in Kluyveromyces lactis (strain ATCC 8585 / CBS 2359 / DSM 70799 / NBRC 1267 / NRRL Y-1140 / WM37) (Yeast).